Consider the following 67-residue polypeptide: Small ribosomal subunit protein bS21 (67 aa).

This sequence belongs to the bacterial ribosomal protein bS21 family.

The sequence is that of Small ribosomal subunit protein bS21 from Desulfovibrio desulfuricans (strain ATCC 27774 / DSM 6949 / MB).